A 312-amino-acid chain; its full sequence is tRNA dimethylallyltransferase (312 aa).

An ATP-binding site is contributed by 17-24 (GPTASGKT). 19-24 (TASGKT) contributes to the substrate binding site. Interaction with substrate tRNA regions lie at residues 42–45 (DSAL), 166–170 (QRLLR), and 247–252 (RCVGYR).

The protein belongs to the IPP transferase family. As to quaternary structure, monomer. Mg(2+) serves as cofactor.

It catalyses the reaction adenosine(37) in tRNA + dimethylallyl diphosphate = N(6)-dimethylallyladenosine(37) in tRNA + diphosphate. Catalyzes the transfer of a dimethylallyl group onto the adenine at position 37 in tRNAs that read codons beginning with uridine, leading to the formation of N6-(dimethylallyl)adenosine (i(6)A). This is tRNA dimethylallyltransferase from Sodalis glossinidius (strain morsitans).